A 1818-amino-acid chain; its full sequence is Protein encore (1818 aa).

Disordered regions lie at residues 47-68 (ANSS…GVSG), 123-282 (SAAG…NSSN), and 317-413 (AERH…GFIS). The span at 52–66 (VGSGSGPGPGSGAGV) shows a compositional bias: gly residues. Residues 124–137 (AAGSSNLGRQNSFG) show a composition bias toward polar residues. Positions 141–152 (GNMKGKHLTRSH) are enriched in basic residues. Composition is skewed to low complexity over residues 156-179 (ESTS…QLQG), 186-199 (NNNN…AQSA), 217-233 (QQPQ…QQSV), and 266-282 (NSNG…NSSN). 2 positions are modified to phosphoserine: serine 267 and serine 270. Residues 317–328 (AERHDRHERHEM) show a composition bias toward basic and acidic residues. The residue at position 336 (serine 336) is a Phosphoserine. Basic and acidic residues predominate over residues 338–348 (NHDEEPYHYEP). Low complexity-rich tracts occupy residues 372 to 381 (NLGGSSSGSI) and 391 to 410 (NCNN…NTSG). Residues 444-508 (RNILLKIEKD…QCVIVAVAKN (65 aa)) form the R3H domain. An SUZ domain is found at 510–576 (RIPEIRFQSL…ARSRIFSRTG (67 aa)). Residue serine 535 is modified to Phosphoserine. Residues 557–568 (FEEREEDYDRAR) are compositionally biased toward basic and acidic residues. Disordered stretches follow at residues 557–806 (FEER…SYEQ), 885–916 (QEQE…SQTP), 936–959 (PYSQ…EEPK), 1176–1249 (GQAP…YNPS), 1332–1648 (AAAG…LVSH), and 1684–1709 (GAGA…RSHI). Over residues 592 to 606 (YGGWEQQQQQQKQSQ) the composition is skewed to low complexity. Positions 644–655 (NYGGPPSSGGPG) are enriched in gly residues. A compositionally biased stretch (polar residues) spans 678–695 (QDSTGSTPWRLSPSSSGS). Positions 713 to 771 (SGNQYQSQNQGNSSSGGYNNYRKSSPHQQQQSQQQQQSQQHHQQQLQQPQQLHQQSSQQ) are enriched in low complexity. Residues 772–784 (YATTELSCSSTES) show a composition bias toward polar residues. A compositionally biased stretch (low complexity) spans 893-904 (AGPSSSGSATSS). Residues 1176 to 1197 (GQAPMQQQAPHTGAGTTTGPPT) show a composition bias toward low complexity. Over residues 1220–1231 (SSNGSVVTSSAY) the composition is skewed to polar residues. Over residues 1381 to 1392 (ASQSAPSTPAAP) the composition is skewed to low complexity. A compositionally biased stretch (polar residues) spans 1430–1443 (TPHYYQGQNSNEGY). The span at 1503 to 1521 (ASPSSVSLGGASSSGGANS) shows a compositional bias: low complexity. Composition is skewed to polar residues over residues 1554-1565 (AANSSPGVSSYE) and 1579-1596 (FRSQ…VSQR). Low complexity predominate over residues 1608 to 1633 (SHESSNNSPNSIVGSQSNSAANTPNA). Over residues 1684–1705 (GAGASGAAGSNGGHQPGGGGGA) the composition is skewed to gly residues.

As to quaternary structure, interacts with hfp; however, given the nuclear localization of hfp, the relevance of such interaction is unclear. Interacts with CycE, Cul1, and the SCF-proteasome complex. In terms of tissue distribution, expressed in all germline cells of the germarium including the stem cells and dividing cystocytes.

The protein resides in the cytoplasm. In terms of biological role, required for the regulation of germline mitosis, karyosome formation, and establishment of dorsoventral (DS) polarity of the egg and embryo. Involved in proper grk mRNA localization and translation in the oocyte. May control germline mitosis by facilitating the cyclin E (CycE) proteolysis by the SCF-ubiquitin-proteasome complex. The sequence is that of Protein encore (enc) from Drosophila melanogaster (Fruit fly).